Here is a 443-residue protein sequence, read N- to C-terminus: MRKFFGTDGIRGKVGAGKMTPELALKLGWAAGRVLSRTGTKKVIIGKDTRISGYLFESAMEAGLSAAGLNVMLMGPMPTPAVAYLTRTFRAEAGVVISASHNPYYDNGIKFFSTDGSKLDDEVELEIERELEKPLECVESHLLGKVSRIEDAAGRYIEYCKGNFPAEHTLNGLKIVVDCAHGATYHIAPSVFRELGAEVITIGDKPDGININHEVGATSMGKIRETVIAEKADLGIALDGDGDRIMMVNRHGKVIDGDEILYILACDAQDRGVLKGGVVGTLMSNLGLDLALKARDIPFARSKVGDRYVMELLKEKDWRIGGENSGHILNLDHGTTGDGIVAGILVLAAMCRKQATLEELTEGIKMLPQVLVNVRFEGTHNPLEADSVLSAQAEVEAKLGERGRVLLRKSGTEPLIRVMVEGDVASDVKAHANYIAEAIKALV.

The Phosphoserine intermediate role is filled by Ser100. Residues Ser100, Asp239, Asp241, and Asp243 each contribute to the Mg(2+) site. Ser100 is subject to Phosphoserine.

The protein belongs to the phosphohexose mutase family. It depends on Mg(2+) as a cofactor. Post-translationally, activated by phosphorylation.

It catalyses the reaction alpha-D-glucosamine 1-phosphate = D-glucosamine 6-phosphate. Functionally, catalyzes the conversion of glucosamine-6-phosphate to glucosamine-1-phosphate. The polypeptide is Phosphoglucosamine mutase (Shewanella loihica (strain ATCC BAA-1088 / PV-4)).